A 532-amino-acid chain; its full sequence is Protein DA1 (532 aa).

Residues 26–71 (VYYDNYPTASHDDEPSAADTDADNDEPHHTQEPSTSEDNTSNDQEN) form a disordered region. A compositionally biased stretch (polar residues) spans 57–68 (EPSTSEDNTSND). The UIM 1 domain maps to 69–88 (QENEDIDRAIALSLLEENQE). Residue lysine 95 forms a Glycyl lysine isopeptide (Lys-Gly) (interchain with G-Cter in ubiquitin) linkage. The 20-residue stretch at 101–120 (DEDEQLARALQESMVVGNSP) folds into the UIM 2 domain. The LIM zinc-binding domain maps to 170–230 (RICAGCNMEI…KACYRERYHP (61 aa)). Residues lysine 221, lysine 348, lysine 376, lysine 381, lysine 391, lysine 474, lysine 475, and lysine 519 each participate in a glycyl lysine isopeptide (Lys-Gly) (interchain with G-Cter in ubiquitin) cross-link.

In terms of assembly, interacts with ubiquitin. Interacts (via C-terminus) with DA2. Interacts with BB. Interacts with UBP15. Interacts with TCP14 and TCP15. In terms of processing, ubiquitinated at Lys-95, Lys-221, Lys-348, Lys-376, Lys-381, Lys-391, Lys-474, Lys-475 and Lys-519 by the E3 ubiquitin-protein ligases BB and DA2.

Ubiquitin receptor that limits final seed and organ size by restricting the period of cell proliferation. May act maternally to control seed mass. Acts synergistically with DA2 to regulate seed size. Functions synergistically with DA2 to restrict cell proliferation in the maternal integuments of ovules and developing seeds. Functions antagonistically in a common pathway with UBP15 to regulate seed size. Associates physically with UBP15 and modulates the stability of UBP15, which promote cell proliferation in the integuments of ovules and developing seeds. Functions as a peptidase and cleaves the N-terminal sequence of E3 ubiquitin-protein ligases BB and DA2 in a ubiquitin-dependent manner. Cleaves the deubiquitinating enzyme UBP15, which promotes cell proliferation, and the transcription factors TCP15 and TCP22, which promote cell proliferation and repress endoreduplication. Involved in the promotion of leaf senescence, in addition to its function in restricting plant growth. Acts redundantly with DAR1 and DAR2 to regulate endoreduplication during leaf development. Together with DAR1 and DAR2, modulates the protein stability of the transcription factors TCP14 and TCP15, which repress endoreduplication by directly regulating the expression of cell-cycle genes. This chain is Protein DA1 (DA1), found in Arabidopsis thaliana (Mouse-ear cress).